The primary structure comprises 143 residues: Transcriptional regulator MraZ (143 aa).

SpoVT-AbrB domains are found at residues 5–47 (EYEH…TLEE) and 76–119 (AVEV…DRAS).

Belongs to the MraZ family. As to quaternary structure, forms oligomers.

Its subcellular location is the cytoplasm. The protein localises to the nucleoid. In Staphylococcus carnosus (strain TM300), this protein is Transcriptional regulator MraZ.